The following is a 249-amino-acid chain: Phosphate import ATP-binding protein PstB 2 (249 aa).

The 241-residue stretch at 4-244 (FEVTHLNLFY…PKDHRTQGYV (241 aa)) folds into the ABC transporter domain. Residue 36–43 (GPSGCGKS) participates in ATP binding.

Belongs to the ABC transporter superfamily. Phosphate importer (TC 3.A.1.7) family. In terms of assembly, the complex is composed of two ATP-binding proteins (PstB), two transmembrane proteins (PstC and PstA) and a solute-binding protein (PstS).

The protein localises to the cell inner membrane. The enzyme catalyses phosphate(out) + ATP + H2O = ADP + 2 phosphate(in) + H(+). Part of the ABC transporter complex PstSACB involved in phosphate import. Responsible for energy coupling to the transport system. This is Phosphate import ATP-binding protein PstB 2 from Shewanella oneidensis (strain ATCC 700550 / JCM 31522 / CIP 106686 / LMG 19005 / NCIMB 14063 / MR-1).